The sequence spans 115 residues: Histone H2A-Bbd type 1 (115 aa).

The disordered stretch occupies residues 1-21; sequence MPRRRRRRGSSGAGGRGRTCS. The tract at residues 87–115 is docking domain; sequence LLDMVVHNDRLLSTLFNTTTISQVAPGED.

The protein belongs to the histone H2A family. As to quaternary structure, the nucleosome is a histone octamer containing two molecules each of H2A, H2B, H3 and H4 assembled in one H3-H4 heterotetramer and two H2A-H2B heterodimers. May be incorporated into a proportion of nucleosomes, replacing one or more H2A molecules. In terms of tissue distribution, present in mature sperm.

It is found in the nucleus. The protein localises to the chromosome. Functionally, atypical histone H2A which can replace conventional H2A in some nucleosomes and is associated with active transcription and mRNA processing. Nucleosomes wrap and compact DNA into chromatin, limiting DNA accessibility to the cellular machineries which require DNA as a template. Histones thereby play a central role in transcription regulation, DNA repair, DNA replication and chromosomal stability. Nucleosomes containing this histone are less rigid and organize less DNA than canonical nucleosomes in vivo. They are enriched in actively transcribed genes and associate with the elongating form of RNA polymerase. They associate with spliceosome components and are required for mRNA splicing. This is Histone H2A-Bbd type 1 from Homo sapiens (Human).